The chain runs to 556 residues: 2-succinyl-5-enolpyruvyl-6-hydroxy-3-cyclohexene-1-carboxylate synthase (556 aa).

This sequence belongs to the TPP enzyme family. MenD subfamily. In terms of assembly, homodimer. Requires Mg(2+) as cofactor. The cofactor is Mn(2+). Thiamine diphosphate is required as a cofactor.

It catalyses the reaction isochorismate + 2-oxoglutarate + H(+) = 5-enolpyruvoyl-6-hydroxy-2-succinyl-cyclohex-3-ene-1-carboxylate + CO2. It functions in the pathway quinol/quinone metabolism; 1,4-dihydroxy-2-naphthoate biosynthesis; 1,4-dihydroxy-2-naphthoate from chorismate: step 2/7. Its pathway is quinol/quinone metabolism; menaquinone biosynthesis. Its function is as follows. Catalyzes the thiamine diphosphate-dependent decarboxylation of 2-oxoglutarate and the subsequent addition of the resulting succinic semialdehyde-thiamine pyrophosphate anion to isochorismate to yield 2-succinyl-5-enolpyruvyl-6-hydroxy-3-cyclohexene-1-carboxylate (SEPHCHC). The polypeptide is 2-succinyl-5-enolpyruvyl-6-hydroxy-3-cyclohexene-1-carboxylate synthase (Shigella flexneri serotype 5b (strain 8401)).